The following is a 951-amino-acid chain: Translation initiation factor IF-2 (951 aa).

2 disordered regions span residues 58-255 and 305-329; these read AERK…AVVI and DVSR…KSLS. Low complexity predominate over residues 101 to 170; it reads AEPQYAEPQQ…PQAQPAQPAA (70 aa). The span at 171–216 shows a compositional bias: pro residues; sequence PVAPPAPSAQPSAPQPPAAQPRPPQPPMPSRPPPAGYRPAPPPGAR. The segment covering 217-234 has biased composition (low complexity); it reads PPMSAAPGAPAQPGAAGQ. Residues 450-619 form the tr-type G domain; that stretch reads IRPPVVTVMG…ALQSEVLELK (170 aa). The tract at residues 459–466 is G1; it reads GHVDHGKT. GTP is bound at residue 459–466; it reads GHVDHGKT. Residues 484–488 form a G2 region; the sequence is GITQH. The tract at residues 505–508 is G3; sequence DTPG. GTP is bound by residues 505–509 and 559–562; these read DTPGH and NKVD. The interval 559 to 562 is G4; it reads NKVD. The interval 595–597 is G5; the sequence is SAR.

The protein belongs to the TRAFAC class translation factor GTPase superfamily. Classic translation factor GTPase family. IF-2 subfamily.

Its subcellular location is the cytoplasm. Functionally, one of the essential components for the initiation of protein synthesis. Protects formylmethionyl-tRNA from spontaneous hydrolysis and promotes its binding to the 30S ribosomal subunits. Also involved in the hydrolysis of GTP during the formation of the 70S ribosomal complex. This is Translation initiation factor IF-2 from Anaeromyxobacter dehalogenans (strain 2CP-1 / ATCC BAA-258).